The chain runs to 468 residues: Arginine biosynthesis bifunctional protein ArgJ, mitochondrial (468 aa).

Residues 1-23 (MVGFSRCALSQLRQPKAQLVRSF) constitute a mitochondrion transit peptide. The substrate site is built by threonine 198, lysine 227, threonine 238, glutamate 324, asparagine 463, and threonine 468. Catalysis depends on threonine 238, which acts as the Nucleophile.

This sequence belongs to the ArgJ family. Heterodimer of an alpha and a beta chain. Post-translationally, the alpha and beta chains are autoproteolytically processed from a single precursor protein within the mitochondrion.

It localises to the mitochondrion matrix. It catalyses the reaction N(2)-acetyl-L-ornithine + L-glutamate = N-acetyl-L-glutamate + L-ornithine. It carries out the reaction L-glutamate + acetyl-CoA = N-acetyl-L-glutamate + CoA + H(+). It functions in the pathway amino-acid biosynthesis; L-arginine biosynthesis; L-ornithine and N-acetyl-L-glutamate from L-glutamate and N(2)-acetyl-L-ornithine (cyclic): step 1/1. Its pathway is amino-acid biosynthesis; L-arginine biosynthesis; N(2)-acetyl-L-ornithine from L-glutamate: step 1/4. Catalyzes two activities which are involved in the cyclic version of arginine biosynthesis: the synthesis of acetylglutamate from glutamate and acetyl-CoA, and of ornithine by transacetylation between acetylornithine and glutamate. The polypeptide is Arginine biosynthesis bifunctional protein ArgJ, mitochondrial (Podospora anserina (strain S / ATCC MYA-4624 / DSM 980 / FGSC 10383) (Pleurage anserina)).